The sequence spans 96 residues: uncharacterized protein (96 aa).

The [3Fe-4S] cluster site is built by cysteine 10, cysteine 16, and cysteine 55. The segment at 67 to 96 (AGDGERASADPAPSPAEAERHAAKDQHNLG) is disordered. Residues 83-96 (EAERHAAKDQHNLG) are compositionally biased toward basic and acidic residues.

It depends on [3Fe-4S] cluster as a cofactor.

Electron transport protein for the cytochrome systems. This is an uncharacterized protein from Bradyrhizobium diazoefficiens (strain JCM 10833 / BCRC 13528 / IAM 13628 / NBRC 14792 / USDA 110).